Reading from the N-terminus, the 73-residue chain is Ubiquitin-like modifier HUB1 (73 aa).

The Ubiquitin-like domain maps to 1–73 (MIEVVVNDRL…DQTNLELYYL (73 aa)).

Functionally, forms conjugate with SPH1 and HBT1. Involved in morphogenesis. This Saccharomyces cerevisiae (strain ATCC 204508 / S288c) (Baker's yeast) protein is Ubiquitin-like modifier HUB1 (HUB1).